Here is a 264-residue protein sequence, read N- to C-terminus: Thymidylate synthase (264 aa).

R21 lines the dUMP pocket. Residue H51 participates in (6R)-5,10-methylene-5,6,7,8-tetrahydrofolate binding. DUMP is bound at residue 126–127 (RR). Residue C146 is the Nucleophile of the active site. DUMP is bound by residues 166–169 (RSAD), N177, and 207–209 (HIY). D169 contacts (6R)-5,10-methylene-5,6,7,8-tetrahydrofolate. Position 263 (S263) interacts with (6R)-5,10-methylene-5,6,7,8-tetrahydrofolate.

The protein belongs to the thymidylate synthase family. Bacterial-type ThyA subfamily. In terms of assembly, homodimer.

The protein localises to the cytoplasm. It carries out the reaction dUMP + (6R)-5,10-methylene-5,6,7,8-tetrahydrofolate = 7,8-dihydrofolate + dTMP. The protein operates within pyrimidine metabolism; dTTP biosynthesis. Its function is as follows. Catalyzes the reductive methylation of 2'-deoxyuridine-5'-monophosphate (dUMP) to 2'-deoxythymidine-5'-monophosphate (dTMP) while utilizing 5,10-methylenetetrahydrofolate (mTHF) as the methyl donor and reductant in the reaction, yielding dihydrofolate (DHF) as a by-product. This enzymatic reaction provides an intracellular de novo source of dTMP, an essential precursor for DNA biosynthesis. This chain is Thymidylate synthase, found in Exiguobacterium sp. (strain ATCC BAA-1283 / AT1b).